A 305-amino-acid chain; its full sequence is tRNA dimethylallyltransferase 2 (305 aa).

14 to 21 (GPTASGKT) contributes to the ATP binding site. 16–21 (TASGKT) provides a ligand contact to substrate. The interaction with substrate tRNA stretch occupies residues 39-42 (DSRQ).

This sequence belongs to the IPP transferase family. As to quaternary structure, monomer. Requires Mg(2+) as cofactor.

The catalysed reaction is adenosine(37) in tRNA + dimethylallyl diphosphate = N(6)-dimethylallyladenosine(37) in tRNA + diphosphate. Its function is as follows. Catalyzes the transfer of a dimethylallyl group onto the adenine at position 37 in tRNAs that read codons beginning with uridine, leading to the formation of N6-(dimethylallyl)adenosine (i(6)A). This is tRNA dimethylallyltransferase 2 from Trichlorobacter lovleyi (strain ATCC BAA-1151 / DSM 17278 / SZ) (Geobacter lovleyi).